We begin with the raw amino-acid sequence, 341 residues long: Tetraacyldisaccharide 4'-kinase (341 aa).

Residue 54–61 (TVGGAGKT) participates in ATP binding.

This sequence belongs to the LpxK family.

The enzyme catalyses a lipid A disaccharide + ATP = a lipid IVA + ADP + H(+). Its pathway is glycolipid biosynthesis; lipid IV(A) biosynthesis; lipid IV(A) from (3R)-3-hydroxytetradecanoyl-[acyl-carrier-protein] and UDP-N-acetyl-alpha-D-glucosamine: step 6/6. In terms of biological role, transfers the gamma-phosphate of ATP to the 4'-position of a tetraacyldisaccharide 1-phosphate intermediate (termed DS-1-P) to form tetraacyldisaccharide 1,4'-bis-phosphate (lipid IVA). This Brucella suis (strain ATCC 23445 / NCTC 10510) protein is Tetraacyldisaccharide 4'-kinase.